Here is a 398-residue protein sequence, read N- to C-terminus: ATP-dependent RNA helicase RhlB (398 aa).

The short motif at 9 to 37 (TRFHDFKLSNELMHAIHDLGFPYCTPIQA) is the Q motif element. Residues 40 to 220 (LGYTLRGQDA…KQWTTNPAIV (181 aa)) form the Helicase ATP-binding domain. 53–60 (AQTGTGKT) contacts ATP. The short motif at 166–169 (DEAD) is the DEAD box element. The 151-residue stretch at 243-393 (DKYKLLYNLV…MPPDELLKPV (151 aa)) folds into the Helicase C-terminal domain.

Belongs to the DEAD box helicase family. RhlB subfamily. Component of the RNA degradosome, which is a multiprotein complex involved in RNA processing and mRNA degradation.

It is found in the cytoplasm. It catalyses the reaction ATP + H2O = ADP + phosphate + H(+). Functionally, DEAD-box RNA helicase involved in RNA degradation. Has RNA-dependent ATPase activity and unwinds double-stranded RNA. The protein is ATP-dependent RNA helicase RhlB of Pseudomonas putida (strain ATCC 47054 / DSM 6125 / CFBP 8728 / NCIMB 11950 / KT2440).